Reading from the N-terminus, the 196-residue chain is Small ribosomal subunit protein uS4c (196 aa).

Residues 17 to 36 (ALPGLTRKTPKSGSNLKKKF) are disordered. Residues 89-150 (MRLDNIVFRL…NQRSKRLVQN (62 aa)) form the S4 RNA-binding domain.

It belongs to the universal ribosomal protein uS4 family. As to quaternary structure, part of the 30S ribosomal subunit. Contacts protein S5. The interaction surface between S4 and S5 is involved in control of translational fidelity.

The protein resides in the plastid. Its subcellular location is the chloroplast. In terms of biological role, one of the primary rRNA binding proteins, it binds directly to 16S rRNA where it nucleates assembly of the body of the 30S subunit. Functionally, with S5 and S12 plays an important role in translational accuracy. This Tragus racemosus (Carrot grass) protein is Small ribosomal subunit protein uS4c (rps4).